The following is a 201-amino-acid chain: Hydroxymethylphosphonate dioxygenase (201 aa).

Residues His-47, His-71, Asp-72, His-94, His-117, and Asp-174 each coordinate Fe cation.

The cofactor is Fe(2+).

It carries out the reaction hydroxymethylphosphonate + O2 = formate + phosphate + 2 H(+). The catalysed reaction is (1R)-(2-amino-1-hydroxyethyl)phosphonate + O2 = glycine + phosphate + 2 H(+). The enzyme catalyses (1R)-(1-hydroxyethyl)phosphonate + O2 = acetate + phosphate + 2 H(+). In terms of biological role, part of an oxidative pathway for utilization of methylphosphonic acid as a phosphate source. Catalyzes the oxidation of hydroxymethylphosphonic acid to produce formate and phosphate. Can also use (1R)-(2-amino-1-hydroxyethyl)phosphonic acid and (R)-1-hydroxyethylphosphonic acid with similar catalytic efficiency. The polypeptide is Hydroxymethylphosphonate dioxygenase (Gimesia maris (strain ATCC 29201 / DSM 8797 / 534-30) (Planctomyces maris)).